The following is a 275-amino-acid chain: 3-methyl-2-oxobutanoate hydroxymethyltransferase (275 aa).

Residues Asp55 and Asp94 each coordinate Mg(2+). 3-methyl-2-oxobutanoate-binding positions include 55–56 (DS), Asp94, and Lys122. Glu124 serves as a coordination point for Mg(2+). Glu191 serves as the catalytic Proton acceptor.

The protein belongs to the PanB family. In terms of assembly, homodecamer; pentamer of dimers. Mg(2+) is required as a cofactor.

It is found in the cytoplasm. It carries out the reaction 3-methyl-2-oxobutanoate + (6R)-5,10-methylene-5,6,7,8-tetrahydrofolate + H2O = 2-dehydropantoate + (6S)-5,6,7,8-tetrahydrofolate. It functions in the pathway cofactor biosynthesis; (R)-pantothenate biosynthesis; (R)-pantoate from 3-methyl-2-oxobutanoate: step 1/2. Its function is as follows. Catalyzes the reversible reaction in which hydroxymethyl group from 5,10-methylenetetrahydrofolate is transferred onto alpha-ketoisovalerate to form ketopantoate. The chain is 3-methyl-2-oxobutanoate hydroxymethyltransferase from Marinomonas sp. (strain MWYL1).